A 290-amino-acid chain; its full sequence is Enoyl-CoA hydratase, mitochondrial (290 aa).

Residues 1-29 (MAALRALLPRACNSLLSPVRCPEFRRFAS) constitute a mitochondrion transit peptide. Residue 98 to 101 (ADIK) participates in substrate binding. N6-acetyllysine; alternate is present on residues K101 and K115. N6-succinyllysine; alternate is present on residues K101 and K115. Substrate is bound at residue G141. An N6-succinyllysine modification is found at K204. K211 is subject to N6-acetyllysine.

It belongs to the enoyl-CoA hydratase/isomerase family. In terms of assembly, homohexamer; dimer of trimers. As to expression, detected in liver (at protein level).

Its subcellular location is the mitochondrion matrix. The enzyme catalyses a (3S)-3-hydroxyacyl-CoA = a (2E)-enoyl-CoA + H2O. It carries out the reaction a (3E)-enoyl-CoA = a 4-saturated (2E)-enoyl-CoA. It catalyses the reaction (3E)-hexenoyl-CoA = (2E)-hexenoyl-CoA. The catalysed reaction is (3S)-3-hydroxybutanoyl-CoA = (2E)-butenoyl-CoA + H2O. The enzyme catalyses 3-hydroxyisovaleryl-CoA = 3-methylbut-2-enoyl-CoA + H2O. It carries out the reaction 3-hydroxypropanoyl-CoA = acryloyl-CoA + H2O. It catalyses the reaction 3-hydroxybutanoyl-CoA = (2E)-butenoyl-CoA + H2O. The catalysed reaction is 2-methylpropenoyl-CoA + H2O = (S)-3-hydroxyisobutanoyl-CoA. The enzyme catalyses (3S)-hydroxyhexanoyl-CoA = (2E)-hexenoyl-CoA + H2O. It carries out the reaction (3S)-hydroxydecanoyl-CoA = (2E)-decenoyl-CoA + H2O. It functions in the pathway lipid metabolism; fatty acid beta-oxidation. Its function is as follows. Converts unsaturated trans-2-enoyl-CoA species ((2E)-enoyl-CoA) to the corresponding 3(S)-3-hydroxyacyl-CoA species through addition of a water molecule to the double bond. Catalyzes the hydration of medium- and short-chained fatty enoyl-CoA thioesters from 4 carbons long (C4) up to C16. Has high substrate specificity for crotonyl-CoA ((2E)-butenoyl-CoA) and moderate specificity for acryloyl-CoA, 3-methylcrotonyl-CoA (3-methyl-(2E)-butenoyl-CoA) and methacrylyl-CoA ((2E)-2-methylpropenoyl-CoA). Can bind tiglyl-CoA (2-methylcrotonoyl-CoA), but hydrates only a small amount of this substrate. Plays a key role in the beta-oxidation spiral of short- and medium-chain fatty acid oxidation. At a lower rate than the hydratase reaction, catalyzes the isomerase reaction of trans-3-enoyl-CoA species (such as (3E)-hexenoyl-CoA) to trans-2-enoyl-CoA species (such as (2E)-hexenoyl-CoA), which are subsequently hydrated to 3(S)-3-hydroxyacyl-CoA species (such as (3S)-hydroxyhexanoyl-CoA). The sequence is that of Enoyl-CoA hydratase, mitochondrial from Rattus norvegicus (Rat).